Reading from the N-terminus, the 2789-residue chain is Multiple epidermal growth factor-like domains protein 8 (2789 aa).

The first 27 residues, M1 to A27, serve as a signal peptide directing secretion. At G28–D2591 the chain is on the extracellular side. Intrachain disulfides connect C30-C57, C142-C152, C146-C158, C174-C184, C178-C191, and C193-C202. A CUB 1 domain is found at C30–S140. N-linked (GlcNAc...) asparagine glycosylation is present at N50. EGF-like domains follow at residues R138–D168 and G170–D203. 6 Kelch repeats span residues L241–W287, L290–A338, W346–P399, T402–A453, Y459–S511, and V525–P575. 3 consecutive PSI domains span residues Y561–Q613, A847–P899, and L900–P947. The N-linked (GlcNAc...) asparagine glycan is linked to N1048. The region spanning D1074–N1115 is the EGF-like 3; calcium-binding domain. 16 disulfide bridges follow: C1078–C1091, C1085–C1100, C1102–C1114, C1163–C1171, C1165–C1179, C1182–C1191, C1194–C1208, C1211–C1224, C1213–C1231, C1233–C1242, C1245–C1259, C1263–C1302, C1336–C1367, C1407–C1421, C1415–C1433, and C1435–C1444. 2 consecutive Laminin EGF-like domains span residues C1163–P1210 and C1211–R1261. Residue N1226 is glycosylated (N-linked (GlcNAc...) asparagine). In terms of domain architecture, CUB 2 spans C1263–A1405. N-linked (GlcNAc...) asparagine glycosylation occurs at N1271. T1353 carries the phosphothreonine modification. Positions G1403–R1445 constitute an EGF-like 4 domain. Kelch repeat units follow at residues T1522–A1570, A1580–R1629, S1632–Y1679, S1685–A1735, T1740–A1787, and R1796–G1841. 4 PSI domains span residues P1820–S1860, E1868–R1923, P2004–S2062, and G2064–P2121. N2010 carries an N-linked (GlcNAc...) asparagine glycan. One can recognise an EGF-like 5 domain in the interval P2122–T2160. 2 cysteine pairs are disulfide-bonded: C2126-C2139 and C2133-C2148. Residues N2158 and N2173 are each glycosylated (N-linked (GlcNAc...) asparagine). Cystine bridges form between C2197–C2205, C2199–C2214, C2217–C2226, C2229–C2243, C2324–C2333, C2326–C2341, C2343–C2368, and C2371–C2385. Laminin EGF-like domains follow at residues C2197–P2245 and C2324–R2387. A disordered region spans residues V2468–P2508. Residues Q2471–D2484 are compositionally biased toward pro residues. A helical membrane pass occupies residues L2592–L2612. Topologically, residues L2613–L2789 are cytoplasmic. Residues G2762–K2776 are compositionally biased toward gly residues. The tract at residues G2762–L2789 is disordered. The segment covering S2780–L2789 has biased composition (polar residues).

In terms of tissue distribution, highest expression in brain, testis and kidney.

The protein resides in the membrane. Acts as a negative regulator of hedgehog signaling. In Mus musculus (Mouse), this protein is Multiple epidermal growth factor-like domains protein 8 (Megf8).